The primary structure comprises 132 residues: NADPH-dependent 7-cyano-7-deazaguanine reductase (132 aa).

The active-site Thioimide intermediate is the cysteine 43. The active-site Proton donor is aspartate 50. Residues 65 to 67 (VEL) and 84 to 85 (HE) each bind substrate.

This sequence belongs to the GTP cyclohydrolase I family. QueF type 1 subfamily.

It localises to the cytoplasm. The enzyme catalyses 7-aminomethyl-7-carbaguanine + 2 NADP(+) = 7-cyano-7-deazaguanine + 2 NADPH + 3 H(+). It functions in the pathway tRNA modification; tRNA-queuosine biosynthesis. In terms of biological role, catalyzes the NADPH-dependent reduction of 7-cyano-7-deazaguanine (preQ0) to 7-aminomethyl-7-deazaguanine (preQ1). The protein is NADPH-dependent 7-cyano-7-deazaguanine reductase of Thermosynechococcus vestitus (strain NIES-2133 / IAM M-273 / BP-1).